A 392-amino-acid chain; its full sequence is MELGVSSQLWLWLLLLLLPPVPGREKESGSKWKVFIDQINRALENYEPCSSPNCSCYHGVIEEDLTPFRGGISRKMMAEVVRRKLGTHYQIIKNRLYRESDCMFPSRCSGVEHFILEVIGRLPDMEMVINVRDYPQVPKWMEPAIPIFSFSKTLEYHDIMYPAWTFWEGGPAVWPIYPMGLGRWDLFREDLVRSAAQWPWKKKNSTAYFRGSRTSPERDPLILLSRKNPKLVDAEYTKNQAWKSMKDTLGKPAAKDVHLVDHCKYKYLFNFRGVAASFRFKHLFLCGSLVFHVGDEWLEFFYPQLKPWVHYIPVKTDLSNVQELLQFVKANDDVAQEIAERGSQFILNHLKMDDITCYWENLLTEYSKFLSYNVTRRKGYDQIVPKILKIEL.

The first 23 residues, 1 to 23, serve as a signal peptide directing secretion; that stretch reads MELGVSSQLWLWLLLLLLPPVPG. 4 cysteine pairs are disulfide-bonded: Cys-49/Cys-56, Cys-54/Cys-357, Cys-102/Cys-108, and Cys-263/Cys-286. A glycan (N-linked (GlcNAc...) asparagine) is linked at Asn-53. Residues 103 to 107 form an interaction with the consensus sequence C-X-S-X-[PA]-C in peptide substrates region; the sequence is MFPSR. The Proton donor/acceptor role is filled by Asp-133. The tract at residues 172–178 is interaction with the consensus sequence C-X-S-X-[PA]-C in peptide substrates; the sequence is AVWPIYP. Tyr-177 lines the UDP-alpha-D-glucose pocket. Residue Asn-204 is glycosylated (N-linked (GlcNAc...) asparagine). Residues Ser-212, Arg-218, and 274–279 each bind UDP-alpha-D-glucose; that span reads VAASFR. Residue Asn-373 is glycosylated (N-linked (GlcNAc...) asparagine). The short motif at 389–392 is the Prevents secretion from ER element; the sequence is KIEL.

Belongs to the glycosyltransferase 90 family.

Its subcellular location is the endoplasmic reticulum lumen. It carries out the reaction L-seryl-[EGF-like domain protein] + UDP-alpha-D-xylose = 3-O-(beta-D-xylosyl)-L-seryl-[EGF-like domain protein] + UDP + H(+). The catalysed reaction is L-seryl-[EGF-like domain protein] + UDP-alpha-D-glucose = 3-O-(beta-D-glucosyl)-L-seryl-[EGF-like domain protein] + UDP + H(+). The protein operates within protein modification; protein glycosylation. Dual specificity glycosyltransferase that catalyzes the transfer of glucose and xylose from UDP-glucose and UDP-xylose, respectively, to a serine residue found in the consensus sequence of C-X-S-X-P-C. Specifically targets extracellular EGF repeats of protein such as CRB2, F7, F9 and NOTCH2. Acts as a positive regulator of Notch signaling by mediating O-glucosylation of Notch, leading to regulate muscle development. Notch glucosylation does not affect Notch ligand binding. Required during early development to promote gastrulation: acts by mediating O-glucosylation of CRB2, which is required for CRB2 localization to the cell membrane. The protein is Protein O-glucosyltransferase 1 (POGLUT1) of Bos taurus (Bovine).